Here is a 416-residue protein sequence, read N- to C-terminus: Cotranscriptional regulator ARB2A (416 aa).

Positions 1-18 are cleaved as a signal peptide; the sequence is MSISLSSLILLPIWINMA. The interval 208–247 is disordered; it reads KPKIHVQSSSDSSDEPAEKRERKDKVSKETKKRRDFYEKY. The segment covering 223–236 has biased composition (basic and acidic residues); the sequence is PAEKRERKDKVSKE. The active-site Nucleophile is Ser293. The Prevents secretion from ER signature appears at 413–416; the sequence is HEEL.

Belongs to the ARB2A family. Interacts with AGO2. Found in a complex, composed of AGO2, CHD7 and ARB2A.

Its subcellular location is the nucleus. The protein localises to the cytoplasm. The protein resides in the endoplasmic reticulum. Functionally, plays a role in the regulation of alternative splicing, by interacting with AGO2 and CHD7. Seems to be required for stabilizing protein-protein interactions at the chromatin-spliceosome interface. May have hydrolase activity. The polypeptide is Cotranscriptional regulator ARB2A (Homo sapiens (Human)).